The chain runs to 382 residues: Sulfate adenylyltransferase (382 aa).

This sequence belongs to the sulfate adenylyltransferase family.

The catalysed reaction is sulfate + ATP + H(+) = adenosine 5'-phosphosulfate + diphosphate. It participates in sulfur metabolism; hydrogen sulfide biosynthesis; sulfite from sulfate: step 1/3. The polypeptide is Sulfate adenylyltransferase (Staphylothermus marinus (strain ATCC 43588 / DSM 3639 / JCM 9404 / F1)).